Reading from the N-terminus, the 1017-residue chain is Sodium/potassium-transporting ATPase subunit alpha-2 (1017 aa).

A disordered region spans residues 1–31 (MDGREYSPAATTSENGGGRRKQKEKELDELK). The Cytoplasmic portion of the chain corresponds to 1–82 (MDGREYSPAA…NALTPPPTTP (82 aa)). Residues 77–79 (PPP) form an interaction with phosphoinositide-3 kinase region. A helical transmembrane segment spans residues 83-103 (EWVKFCRQLFGGFSILLWIGA). At 104-126 (ILCFLAYGIQAAMEDEPSNDNLY) the chain is on the extracellular side. A helical transmembrane segment spans residues 127–147 (LGVVLAAVVIVTGCFSYYQEA). Residues 148-283 (KSSKIMDSFK…VGRTPIAMEI (136 aa)) lie on the Cytoplasmic side of the membrane. A disordered region spans residues 207-228 (KVDNSSLTGESEPQTRSPEFTH). Over residues 209-224 (DNSSLTGESEPQTRSP) the composition is skewed to polar residues. A helical transmembrane segment spans residues 284-303 (EHFIRLITGVAVFLGLSFFI). The Extracellular portion of the chain corresponds to 304 to 315 (LSLILGYTWLEA). A helical transmembrane segment spans residues 316 to 333 (VIFLIGIIVANVPEGLLA). The Cytoplasmic segment spans residues 334-766 (TVTVCLTLTA…EEGRLIFDNL (433 aa)). The active-site 4-aspartylphosphate intermediate is the aspartate 371. Lysine 502 serves as a coordination point for ATP. Residues aspartate 711 and aspartate 715 each coordinate Mg(2+). The helical transmembrane segment at 767-786 (KKSIAYTLTSNIPEITPFLL) threads the bilayer. The Extracellular portion of the chain corresponds to 787-796 (FIIANIPLPL). A helical membrane pass occupies residues 797–817 (GTVTILCIDLGTDMVPAISLA). The Cytoplasmic segment spans residues 818–837 (YEAAESDIMKRQPRNPRTDK). The helical transmembrane segment at 838–860 (LVNERLISMAYGQIGMIQALGGF) threads the bilayer. The Extracellular segment spans residues 861 to 912 (FTYFVILAENGFLPARLLGVRLAWDDRSTNDLEDSYGQEWTYEQRKVVEFTC). The chain crosses the membrane as a helical span at residues 913–932 (HTAFFASIVVVQWADLIICK). The Cytoplasmic segment spans residues 933–945 (TRRNSVFQQGMKN). Serine 937 carries the phosphoserine; by PKA modification. A helical membrane pass occupies residues 946-964 (KILIFGLLEETALAAFLSY). Over 965–979 (CPGMGVALRMYPLKV) the chain is Extracellular. A helical transmembrane segment spans residues 980 to 1000 (TWWFCAFPYSLLIFAYDEVRK). At 1001 to 1017 (LILRRYPGGWVEKETYY) the chain is on the cytoplasmic side.

This sequence belongs to the cation transport ATPase (P-type) (TC 3.A.3) family. Type IIC subfamily. In terms of assembly, the sodium/potassium-transporting ATPase is composed of a catalytic alpha subunit, an auxiliary non-catalytic beta subunit and an additional regulatory subunit.

Its subcellular location is the membrane. The protein localises to the cell membrane. The enzyme catalyses K(+)(out) + Na(+)(in) + ATP + H2O = K(+)(in) + Na(+)(out) + ADP + phosphate + H(+). Its function is as follows. This is the catalytic component of the active enzyme, which catalyzes the hydrolysis of ATP coupled with the exchange of sodium and potassium ions across the plasma membrane. This action creates the electrochemical gradient of sodium and potassium ions, providing the energy for active transport of various nutrients. This is Sodium/potassium-transporting ATPase subunit alpha-2 (ATP1A2) from Gallus gallus (Chicken).